The primary structure comprises 177 residues: R-phycoerythrin beta chain (177 aa).

The (2R,3E)-phycoerythrobilin site is built by Asn35 and Asp39. Phycourobilin-binding residues include Cys50, Asp54, and Cys61. (2R,3E)-phycoerythrobilin is bound by residues Asn72, 77 to 78, Cys82, and 84 to 85; these read RR and RD. At Asn72 the chain carries N4-methylasparagine. A phycourobilin-binding site is contributed by 147-148; sequence SQ. (2R,3E)-phycoerythrobilin-binding residues include Ile154 and Cys158.

This sequence belongs to the phycobiliprotein family. In terms of assembly, heterododecamer of 6 alpha and 6 beta chains. The basic functional unit of phycobiliproteins is a ring-shaped hexamer formed from two back-to-back trimers contacting via the alpha chain subunits. The trimers are composed of alpha/beta subunit heterodimers arranged around a three-fold axis of symmetry. The phycoerythrins also contain a gamma subunit which is located in the center of the hexamer. Post-translationally, contains two covalently linked phycoerythrobilin chromophores and one covalently linked phycourobilin chromophore.

It localises to the plastid. It is found in the chloroplast thylakoid membrane. Light-harvesting photosynthetic tetrapyrrole chromophore-protein from the phycobiliprotein complex. This chain is R-phycoerythrin beta chain (rpeB), found in Agarophyton chilense (Red seaweed).